The following is a 151-amino-acid chain: NPC intracellular cholesterol transporter 2 (151 aa).

The first 19 residues, 1–19 (MRFLAATFLLLALSTAAQA), serve as a signal peptide directing secretion. 3 cysteine pairs are disulfide-bonded: cysteine 27-cysteine 140, cysteine 42-cysteine 47, and cysteine 93-cysteine 99. Asparagine 58 carries an N-linked (GlcNAc...) asparagine glycan. N6-acetyllysine is present on lysine 116. N-linked (GlcNAc...) asparagine glycosylation is present at asparagine 135.

The protein belongs to the NPC2 family. As to quaternary structure, interacts with NPC1 (via the second lumenal domain) in a cholestrol-dependent manner. Interacts with NUS1/NgBR, the interaction stabilizes NCP2 and regulates cholesterol trafficking. Interacts with DHDDS. Interacts with NEDD4L (via C2 domain). Interacts with NPC1L1. In terms of tissue distribution, detected in gallbladder bile. Detected in fibroblasts, kidney, liver, spleen, small intestine, placenta and testis (at protein level). Epididymis.

The protein localises to the secreted. The protein resides in the endoplasmic reticulum. Its subcellular location is the lysosome. It catalyses the reaction cholesterol(in) = cholesterol(out). Functionally, intracellular cholesterol transporter which acts in concert with NPC1 and plays an important role in the egress of cholesterol from the lysosomal compartment. Unesterified cholesterol that has been released from LDLs in the lumen of the late endosomes/lysosomes is transferred by NPC2 to the cholesterol-binding pocket in the N-terminal domain of NPC1. May bind and mobilize cholesterol that is associated with membranes. NPC2 binds cholesterol with a 1:1 stoichiometry. Can bind a variety of sterols, including lathosterol, desmosterol and the plant sterols stigmasterol and beta-sitosterol. The secreted form of NCP2 regulates biliary cholesterol secretion via stimulation of ABCG5/ABCG8-mediated cholesterol transport. This is NPC intracellular cholesterol transporter 2 from Homo sapiens (Human).